The following is a 464-amino-acid chain: tRNA modification GTPase MnmE (464 aa).

Residues arginine 23, glutamate 84, and arginine 123 each coordinate (6S)-5-formyl-5,6,7,8-tetrahydrofolate. The 171-residue stretch at 216 to 386 folds into the TrmE-type G domain; the sequence is GARATLVGRP…LGATVARLLL (171 aa). Asparagine 226 contributes to the K(+) binding site. GTP-binding positions include 226 to 231, 245 to 251, and 270 to 273; these read NAGKSS, TPIPGTT, and DTAG. Serine 230 contributes to the Mg(2+) binding site. K(+) contacts are provided by threonine 245, isoleucine 247, and threonine 250. A Mg(2+)-binding site is contributed by threonine 251. Lysine 464 provides a ligand contact to (6S)-5-formyl-5,6,7,8-tetrahydrofolate.

Belongs to the TRAFAC class TrmE-Era-EngA-EngB-Septin-like GTPase superfamily. TrmE GTPase family. In terms of assembly, homodimer. Heterotetramer of two MnmE and two MnmG subunits. It depends on K(+) as a cofactor.

Its subcellular location is the cytoplasm. Its function is as follows. Exhibits a very high intrinsic GTPase hydrolysis rate. Involved in the addition of a carboxymethylaminomethyl (cmnm) group at the wobble position (U34) of certain tRNAs, forming tRNA-cmnm(5)s(2)U34. The polypeptide is tRNA modification GTPase MnmE (Roseiflexus castenholzii (strain DSM 13941 / HLO8)).